A 200-amino-acid polypeptide reads, in one-letter code: Interferon lambda-2 (200 aa).

Residues 1-25 (MKLDMTGDCTPVLVLMAAVLTVTGA) form the signal peptide.

This sequence belongs to the lambda interferon family.

It is found in the secreted. Its function is as follows. Cytokine with antiviral, antitumour and immunomodulatory activities. Plays a critical role in the antiviral host defense, predominantly in the epithelial tissues. Acts as a ligand for the heterodimeric class II cytokine receptor composed of IL10RB and IFNLR1, and receptor engagement leads to the activation of the JAK/STAT signaling pathway resulting in the expression of IFN-stimulated genes (ISG), which mediate the antiviral state. Has a restricted receptor distribution and therefore restricted targets: is primarily active in epithelial cells and this cell type-selective action is because of the epithelial cell-specific expression of its receptor IFNLR1. Seems not to be essential for early virus-activated host defense in vaginal infection, but plays an important role in Toll-like receptor (TLR)-induced antiviral defense. Plays a significant role in the antiviral immune defense in the intestinal epithelium. Exerts an immunomodulatory effect by up-regulating MHC class I antigen expression. This is Interferon lambda-2 (IFNL2) from Homo sapiens (Human).